The following is a 98-amino-acid chain: Aspartyl/glutamyl-tRNA(Asn/Gln) amidotransferase subunit C (98 aa).

It belongs to the GatC family. As to quaternary structure, heterotrimer of A, B and C subunits.

It catalyses the reaction L-glutamyl-tRNA(Gln) + L-glutamine + ATP + H2O = L-glutaminyl-tRNA(Gln) + L-glutamate + ADP + phosphate + H(+). The enzyme catalyses L-aspartyl-tRNA(Asn) + L-glutamine + ATP + H2O = L-asparaginyl-tRNA(Asn) + L-glutamate + ADP + phosphate + 2 H(+). Its function is as follows. Allows the formation of correctly charged Asn-tRNA(Asn) or Gln-tRNA(Gln) through the transamidation of misacylated Asp-tRNA(Asn) or Glu-tRNA(Gln) in organisms which lack either or both of asparaginyl-tRNA or glutaminyl-tRNA synthetases. The reaction takes place in the presence of glutamine and ATP through an activated phospho-Asp-tRNA(Asn) or phospho-Glu-tRNA(Gln). This chain is Aspartyl/glutamyl-tRNA(Asn/Gln) amidotransferase subunit C, found in Paenarthrobacter aurescens (strain TC1).